Here is a 726-residue protein sequence, read N- to C-terminus: Catalase-peroxidase (726 aa).

Residues 1–33 (MSTSDDIHNTTATGKCPFHQGGHDQSAGAGTTT) form a disordered region. The tryptophyl-tyrosyl-methioninium (Trp-Tyr) (with M-252) cross-link spans 105–226 (WHGAGTYRSI…LGATEMGLIY (122 aa)). The active-site Proton acceptor is the histidine 106. Positions 226–252 (YVNPEGPDHSGEPLSAAAAIRATFGNM) form a cross-link, tryptophyl-tyrosyl-methioninium (Tyr-Met) (with W-105). Histidine 267 provides a ligand contact to heme b.

Belongs to the peroxidase family. Peroxidase/catalase subfamily. Homodimer or homotetramer. The cofactor is heme b. Post-translationally, formation of the three residue Trp-Tyr-Met cross-link is important for the catalase, but not the peroxidase activity of the enzyme.

It catalyses the reaction H2O2 + AH2 = A + 2 H2O. It carries out the reaction 2 H2O2 = O2 + 2 H2O. Its function is as follows. Bifunctional enzyme with both catalase and broad-spectrum peroxidase activity. This chain is Catalase-peroxidase, found in Shigella sonnei (strain Ss046).